The chain runs to 296 residues: Probable xyloglucan endotransglucosylase/hydrolase 1 (296 aa).

An N-terminal signal peptide occupies residues 1 to 22 (MGIIKGVLFSIVLINLSLVVFC). The region spanning 23-221 (GYPRRPVDVP…WANAPFTASY (199 aa)) is the GH16 domain. Glutamate 107 serves as the catalytic Nucleophile. Glutamate 111 acts as the Proton donor in catalysis. Residue glutamate 111 participates in xyloglucan binding. An N-linked (GlcNAc...) asparagine glycan is attached at asparagine 115. Residues 124-126 (QTN), 134-136 (NRE), 200-201 (DW), and glycine 205 contribute to the xyloglucan site. 2 cysteine pairs are disulfide-bonded: cysteine 229–cysteine 240 and cysteine 277–cysteine 290. Arginine 282 serves as a coordination point for xyloglucan.

Belongs to the glycosyl hydrolase 16 family. XTH group 1 subfamily. In terms of processing, contains at least one intrachain disulfide bond essential for its enzymatic activity.

It localises to the secreted. The protein resides in the cell wall. It is found in the extracellular space. The protein localises to the apoplast. It carries out the reaction breaks a beta-(1-&gt;4) bond in the backbone of a xyloglucan and transfers the xyloglucanyl segment on to O-4 of the non-reducing terminal glucose residue of an acceptor, which can be a xyloglucan or an oligosaccharide of xyloglucan.. Functionally, catalyzes xyloglucan endohydrolysis (XEH) and/or endotransglycosylation (XET). Cleaves and religates xyloglucan polymers, an essential constituent of the primary cell wall, and thereby participates in cell wall construction of growing tissues. The chain is Probable xyloglucan endotransglucosylase/hydrolase 1 (XTH1) from Solanum lycopersicum (Tomato).